The following is a 135-amino-acid chain: Agouti-signaling protein (135 aa).

Positions 1–22 (MNILRLLLATLLVCLCLLTAYS) are cleaved as a signal peptide. N-linked (GlcNAc...) asparagine glycosylation occurs at N39. A disordered region spans residues 56 to 101 (NKKSKKISRKEAEKKRSSKKKASMKNVAQPRRPRPPPPAPCVATRD). 5 cysteine pairs are disulfide-bonded: C96–C111, C103–C117, C110–C128, C114–C135, and C119–C126. Residues 96–135 (CVATRDSCKPPAPACCDPCASCQCRFFRSSCSCRVLNPTC) enclose the Agouti domain.

It is found in the secreted. In terms of biological role, involved in the regulation of melanogenesis. The binding of ASP to MC1R precludes alpha-MSH initiated signaling and thus blocks production of cAMP, leading to a down-regulation of eumelanogenesis (brown/black pigment) and thus increasing synthesis of pheomelanin (yellow/red pigment). The polypeptide is Agouti-signaling protein (ASIP) (Felis catus (Cat)).